The primary structure comprises 246 residues: Outer membrane protein assembly factor BamD (246 aa).

Residues 1 to 22 (MKKKNSIIFVFMILFFNSTVQS) form the signal peptide.

Belongs to the BamD family. As to quaternary structure, part of the Bam complex.

The protein localises to the cell outer membrane. Its function is as follows. Part of the outer membrane protein assembly complex, which is involved in assembly and insertion of beta-barrel proteins into the outer membrane. This Buchnera aphidicola subsp. Acyrthosiphon pisum (strain APS) (Acyrthosiphon pisum symbiotic bacterium) protein is Outer membrane protein assembly factor BamD.